Here is a 284-residue protein sequence, read N- to C-terminus: Bifunctional protein FolD (284 aa).

NADP(+) is bound by residues 166–168 (GAS) and Ile-232.

It belongs to the tetrahydrofolate dehydrogenase/cyclohydrolase family. Homodimer.

It catalyses the reaction (6R)-5,10-methylene-5,6,7,8-tetrahydrofolate + NADP(+) = (6R)-5,10-methenyltetrahydrofolate + NADPH. The enzyme catalyses (6R)-5,10-methenyltetrahydrofolate + H2O = (6R)-10-formyltetrahydrofolate + H(+). It participates in one-carbon metabolism; tetrahydrofolate interconversion. Functionally, catalyzes the oxidation of 5,10-methylenetetrahydrofolate to 5,10-methenyltetrahydrofolate and then the hydrolysis of 5,10-methenyltetrahydrofolate to 10-formyltetrahydrofolate. This chain is Bifunctional protein FolD, found in Pseudomonas fluorescens (strain ATCC BAA-477 / NRRL B-23932 / Pf-5).